We begin with the raw amino-acid sequence, 382 residues long: D-galactonate dehydratase (382 aa).

Residue D183 participates in Mg(2+) binding. H185 acts as the Proton donor in catalysis. 2 residues coordinate Mg(2+): E209 and E235. The active-site Proton acceptor is the H285.

Belongs to the mandelate racemase/muconate lactonizing enzyme family. GalD subfamily. The cofactor is Mg(2+).

The enzyme catalyses D-galactonate = 2-dehydro-3-deoxy-D-galactonate + H2O. The protein operates within carbohydrate acid metabolism; D-galactonate degradation; D-glyceraldehyde 3-phosphate and pyruvate from D-galactonate: step 1/3. Functionally, catalyzes the dehydration of D-galactonate to 2-keto-3-deoxy-D-galactonate. The polypeptide is D-galactonate dehydratase (Escherichia coli (strain 55989 / EAEC)).